A 2541-amino-acid polypeptide reads, in one-letter code: Talin-1 (2541 aa).

Positions 86–403 constitute an FERM domain; it reads RPLKIRMLDG…GYIDIILKKK (318 aa). Phosphothreonine is present on Thr-167. The interval 280–435 is interaction with LAYN; that stretch reads FQAHKNCGQM…PKKSTVLQQQ (156 aa). Phosphoserine occurs at positions 405, 425, 446, 620, and 729. The helical bundle R1 stretch occupies residues 482-655; it reads RGHMPPLTSA…QASGELLQQI (174 aa). The tract at residues 656-786 is helical bundle R2; sequence GESDTDPHFQ…ALNELLQHVK (131 aa). Residues 787–911 form a helical bundle R3 region; the sequence is AHATGAGPAG…NAAAQNAIKK (125 aa). Residues 913-1044 form a helical bundle R4 region; sequence LVQRLEHAAK…RTAAQKAQEA (132 aa). A Phosphoserine modification is found at Ser-1021. Residues 1046–1206 form a helical bundle R5 region; sequence GPLEMDSALS…NRCVSCLPGQ (161 aa). Tyr-1116 is subject to Phosphotyrosine. Residue Thr-1142 is modified to Phosphothreonine. Phosphoserine occurs at positions 1201 and 1225. Residues 1207 to 1357 are helical bundle R6; sequence RDVDNALRAV…QLITMCTQQA (151 aa). Position 1263 is a phosphothreonine (Thr-1263). 2 positions are modified to phosphoserine: Ser-1323 and Ser-1328. Residues 1327–1948 form an interaction with SYNM region; it reads ASPNLKSQLA…CSPSDVYTKK (622 aa). The interval 1358–1453 is helical bundle R7A; Interaction with KANK1; it reads PGQKECDNAL…AYLVGVSDPN (96 aa). Positions 1359–1659 are interaction with VCL and F-actin; the sequence is GQKECDNALR…SMRDKAPGQL (301 aa). Residues 1461–1580 are helical bundle R8; sequence LVEPTQFARA…NLSAFASNPE (120 aa). At Lys-1544 the chain carries N6-acetyllysine. The helical bundle R7B; Interaction with KANK1 stretch occupies residues 1581–1653; the sequence is FSSVPAQISP…IKKLITSMRD (73 aa). The segment at 1655–1822 is helical bundle R9; the sequence is APGQLECETA…TLNEAASAAG (168 aa). Positions 1823 to 1973 are helical bundle R10; sequence VVGGMVDSIT…VLAALQAGNR (151 aa). Ser-1849 carries the post-translational modification Phosphoserine. At Thr-1855 the chain carries Phosphothreonine. Residue Ser-1878 is modified to Phosphoserine. Residues 1974 to 2140 are helical bundle R11; it reads GTQACITAAS…TVKAVEDEAT (167 aa). An N6-acetyllysine modification is found at Lys-2031. Phosphoserine is present on Ser-2040. Residue Lys-2115 is modified to N6-acetyllysine. Positions 2141–2294 are helical bundle R12; that stretch reads KGTRALEATT…QAAEAMKGTE (154 aa). Positions 2293 to 2533 constitute an I/LWEQ domain; it reads TEWVDPEDPT…QIRQQQYKFL (241 aa). The segment at 2300–2482 is helical bundle R13; it reads DPTVIAENEL…AAQKAAAFED (183 aa).

Part of a complex composed of THSD1, PTK2/FAK1, TLN1 and VCL. Interacts with THSD1; this promotes interaction with PTK2/FAK1 and VCL. Interacts with NRAP and LAYN. Interacts with SYNM. Interacts with ITGB1; the interaction is prevented by competitive binding of ITGB1BP1. Binds with high affinity to VCL and with low affinity to integrins. Interacts with APBB1IP; this inhibits VCL binding. Interacts with PTK2/FAK1. Interacts with PIP5K1C. Interacts with F-actin. Interacts with SVEP1. Interacts (via R7 domain) with KANK1 or KANK2 (via KN motif); this interaction likely initiates the assembly of cortical microtubule stabilization complexes (CMSCs) at the vicinity of focal adhesions.

Its subcellular location is the cell projection. It is found in the ruffle membrane. The protein resides in the cytoplasm. It localises to the cytoskeleton. The protein localises to the cell surface. Its subcellular location is the cell junction. It is found in the focal adhesion. Functionally, high molecular weight cytoskeletal protein concentrated at regions of cell-matrix and cell-cell contacts. Involved in connections of major cytoskeletal structures to the plasma membrane. With KANK1 co-organize the assembly of cortical microtubule stabilizing complexes (CMSCs) positioned to control microtubule-actin crosstalk at focal adhesions (FAs) rims. In Mus musculus (Mouse), this protein is Talin-1 (Tln1).